We begin with the raw amino-acid sequence, 200 residues long: Recombination protein RecR (200 aa).

The C4-type zinc finger occupies 59-74; the sequence is CGTCGSLDVTDPCAVC. In terms of domain architecture, Toprim spans 82–177; sequence RLLCVVEEVG…PVTMLARGVP (96 aa).

Belongs to the RecR family.

May play a role in DNA repair. It seems to be involved in an RecBC-independent recombinational process of DNA repair. It may act with RecF and RecO. This is Recombination protein RecR from Caulobacter vibrioides (strain ATCC 19089 / CIP 103742 / CB 15) (Caulobacter crescentus).